A 458-amino-acid polypeptide reads, in one-letter code: 5-hydroxytryptamine receptor 2C (458 aa).

Residues 1–32 (MVNLRNAVHSFLVHLIGLLVWQCDISVSPVAA) form the signal peptide. At 33–55 (IVTDIFNTSDGGRFKFPDGVQNW) the chain is on the extracellular side. Residues 56-80 (PALSIVVIIIMTIGGNILVIMAVSM) form a helical membrane-spanning segment. Residues 81–86 (EKKLHN) are Cytoplasmic-facing. The helical transmembrane segment at 87-111 (ATNYFLMSLAIADMLVGLLVMPLSL) threads the bilayer. Residues 112–128 (LAILYDYVWPLPRYLCP) are Extracellular-facing. The cysteines at positions 127 and 207 are disulfide-linked. A helical transmembrane segment spans residues 129–151 (VWISLDVLFSTASIMHLCAISLD). T139 is an ergotamine binding site. A DRY motif; important for ligand-induced conformation changes motif is present at residues 151–153 (DRY). Residues 152 to 167 (RYVAIRNPIEHSRFNS) lie on the Cytoplasmic side of the membrane. The chain crosses the membrane as a helical span at residues 168–189 (RTKAIMKIAIVWAISIGVSVPI). Residues 190-213 (PVIGLRDERKVFVNNTTCVLNDPN) are Extracellular-facing. L209 lines the ergotamine pocket. A helical transmembrane segment spans residues 214–236 (FVLIGSFVAFFIPLTIMVITYCL). Topologically, residues 237–311 (TIYVLRRQAL…AINNERKASK (75 aa)) are cytoplasmic. The disordered stretch occupies residues 274–301 (EENSANPNQDQNARRRKKKERRPRGTMQ). The span at 287-297 (RRRKKKERRPR) shows a compositional bias: basic residues. The helical transmembrane segment at 312 to 336 (VLGIVFFVFLIMWCPFFITNILSVL) threads the bilayer. C337 and C341 are oxidised to a cystine. Residues 337-347 (CEKSCNQKLME) lie on the Extracellular side of the membrane. A helical transmembrane segment spans residues 348–370 (KLLNVFVWIGYVCSGINPLVYTL). An NPxxY motif; important for ligand-induced conformation changes and signaling motif is present at residues 364–368 (NPLVY). Residues 371–458 (FNKIYRRAFS…SVVSERISSV (88 aa)) lie on the Cytoplasmic side of the membrane. Residues 456-458 (SSV) carry the PDZ-binding motif.

This sequence belongs to the G-protein coupled receptor 1 family. Interacts with MPDZ. Interacts with ARRB2. Interacts with MPP3; this interaction stabilizes the receptor at the plasma membrane and prevents the desensitization of the HTR2C receptor-mediated calcium response.

It is found in the cell membrane. Functionally, G-protein coupled receptor for 5-hydroxytryptamine (serotonin). Also functions as a receptor for various drugs and psychoactive substances, including ergot alkaloid derivatives, 1-2,5,-dimethoxy-4-iodophenyl-2-aminopropane (DOI) and lysergic acid diethylamide (LSD). Ligand binding causes a conformation change that triggers signaling via guanine nucleotide-binding proteins (G proteins) and modulates the activity of downstream effectors. HTR2C is coupled to G(q)/G(11) G alpha proteins and activates phospholipase C-beta, releasing diacylglycerol (DAG) and inositol 1,4,5-trisphosphate (IP3) second messengers that modulate the activity of phosphatidylinositol 3-kinase and promote the release of Ca(2+) ions from intracellular stores, respectively. Beta-arrestin family members inhibit signaling via G proteins and mediate activation of alternative signaling pathways. Regulates neuronal activity via the activation of short transient receptor potential calcium channels in the brain, and thereby modulates the activation of pro-opiomelanocortin neurons and the release of CRH that then regulates the release of corticosterone. Plays a role in the regulation of appetite and eating behavior, responses to anxiogenic stimuli and stress. Plays a role in insulin sensitivity and glucose homeostasis. This is 5-hydroxytryptamine receptor 2C from Pan troglodytes (Chimpanzee).